Here is a 284-residue protein sequence, read N- to C-terminus: Cell division protein ZipA (284 aa).

Residue methionine 1 is a topological domain, periplasmic. Residues 2 to 22 (EIGLREWLIVIGIIVIAGILF) traverse the membrane as a helical segment. Residues 23–284 (DGWRRMRGGK…FERRALTQKR (262 aa)) are Cytoplasmic-facing. The segment at 47 to 140 (PDDEGSAELL…SASHSDKDQP (94 aa)) is disordered. 3 stretches are compositionally biased toward basic and acidic residues: residues 62 to 75 (LDTH…EHDL), 83 to 102 (REPR…EPHQ), and 119 to 140 (SRDD…KDQP).

Belongs to the ZipA family. As to quaternary structure, interacts with FtsZ via their C-terminal domains.

The protein resides in the cell inner membrane. Its function is as follows. Essential cell division protein that stabilizes the FtsZ protofilaments by cross-linking them and that serves as a cytoplasmic membrane anchor for the Z ring. Also required for the recruitment to the septal ring of downstream cell division proteins. This chain is Cell division protein ZipA, found in Pseudomonas fluorescens (strain ATCC BAA-477 / NRRL B-23932 / Pf-5).